The sequence spans 40 residues: Accessory gland-specific peptide 57Db (40 aa).

Residues 1-17 (MKITSALVLLFAGVAFA) form the signal peptide.

In terms of tissue distribution, lumen fluid of male accessory glands, becomes seminal fluid.

It localises to the secreted. In terms of biological role, transferred from male to female during mating and may affect egglaying and behavior after mating. In Drosophila melanogaster (Fruit fly), this protein is Accessory gland-specific peptide 57Db (Mst57Db).